A 547-amino-acid polypeptide reads, in one-letter code: MDGSRVQLWAKTDPFLLGALQMPPPAKFSMHYLRKMASYVRTRATEGCYPRLYWAMWRHIACGKLQIVEETAWLYFETFLSVFERSVAQSLDWAEVASTCPSSEKYEEIKSQLSVDTLKFILFLYIQQINKISLRAPMIESEWPSPRSRSPTPDFVAQSSIYNKVWDDYSHYNFIHNHLTYILELLMEPKQLSIVTQSSHCILISAEVVNALGFLIEGTVDKNRAVNHFLDLAVWQPVQIKSGFIETSGAFSFQKLQAWIKECLVINPFGITACIKSGTKLSWAQQVDGLNKRAKVACNTYKVPHTHRMVVMSQISKQTLAKSSKTLVDARVKIHRCSDCYIYLLSPLRSVTVEKCQNCTIILGPVQTVLHIQMCYNVKIIAVCQRLSLLSTTNCTFHILTPTRPLFYCGNQGAVLAPFHIRYSMLEDHMAQTGLATVPNSWDRPFLFSTESNNSNIWRLMPPEDFFTFVVPFEMEGDTTEIPGGLPPAYSNSVQQRQQKIHTWQKTVKDAGLTREQRKQFQAVVEMKFNEWLSKTENRHQLDSLVS.

Residues 304-435 (PHTHRMVVMS…LEDHMAQTGL (132 aa)) enclose the C-CAP/cofactor C-like domain.

It belongs to the TBCC family.

It is found in the cytoplasm. It localises to the cytoskeleton. The protein resides in the microtubule organizing center. Its subcellular location is the centrosome. The protein localises to the spindle pole. Its function is as follows. May play a role in the regulation of centrosome and Golgi apparatus positioning. This Xenopus laevis (African clawed frog) protein is TBCC domain-containing protein 1 (tbccd1).